The following is a 434-amino-acid chain: Alpha-enolase (434 aa).

Serine 40 contacts Mg(2+). The substrate site is built by histidine 158 and glutamate 167. Catalysis depends on glutamate 210, which acts as the Proton donor. Residues aspartate 245, glutamate 293, and aspartate 318 each contribute to the Mg(2+) site. Residues glutamate 293 and aspartate 318 each coordinate substrate. The Proton acceptor role is filled by lysine 343. Residues 370-373 (SHRS) and lysine 394 each bind substrate.

The protein belongs to the enolase family. As to quaternary structure, homodimer. Mg(2+) serves as cofactor.

The protein resides in the cytoplasm. The enzyme catalyses (2R)-2-phosphoglycerate = phosphoenolpyruvate + H2O. It functions in the pathway carbohydrate degradation; glycolysis; pyruvate from D-glyceraldehyde 3-phosphate: step 4/5. The sequence is that of Alpha-enolase from Python regius (Ball python).